The following is a 576-amino-acid chain: Sulfite reductase [NADPH] hemoprotein beta-component (576 aa).

C434, C440, C479, and C483 together coordinate [4Fe-4S] cluster. C483 serves as a coordination point for siroheme.

It belongs to the nitrite and sulfite reductase 4Fe-4S domain family. Alpha(8)-beta(8). The alpha component is a flavoprotein, the beta component is a hemoprotein. Siroheme serves as cofactor. Requires [4Fe-4S] cluster as cofactor.

It carries out the reaction hydrogen sulfide + 3 NADP(+) + 3 H2O = sulfite + 3 NADPH + 4 H(+). It functions in the pathway sulfur metabolism; hydrogen sulfide biosynthesis; hydrogen sulfide from sulfite (NADPH route): step 1/1. Component of the sulfite reductase complex that catalyzes the 6-electron reduction of sulfite to sulfide. This is one of several activities required for the biosynthesis of L-cysteine from sulfate. This chain is Sulfite reductase [NADPH] hemoprotein beta-component, found in Oceanobacillus iheyensis (strain DSM 14371 / CIP 107618 / JCM 11309 / KCTC 3954 / HTE831).